The sequence spans 257 residues: Glutamate racemase (257 aa).

Residues 12–13 (DS) and 44–45 (YG) each bind substrate. The active-site Proton donor/acceptor is the Cys-75. Substrate is bound at residue 76–77 (NT). Cys-185 acts as the Proton donor/acceptor in catalysis. Residue 186-187 (TH) participates in substrate binding.

It belongs to the aspartate/glutamate racemases family.

It carries out the reaction L-glutamate = D-glutamate. It functions in the pathway cell wall biogenesis; peptidoglycan biosynthesis. In terms of biological role, provides the (R)-glutamate required for cell wall biosynthesis. The protein is Glutamate racemase of Clostridium botulinum (strain Loch Maree / Type A3).